The sequence spans 287 residues: Protease HtpX homolog (287 aa).

2 helical membrane-spanning segments follow: residues 5–25 (IRTGLLMAALTALFVAIGYWI) and 28–48 (GAGAAIALAFAAAGNFVAYWV). Position 131 (H131) interacts with Zn(2+). The active site involves E132. H135 provides a ligand contact to Zn(2+). 2 helical membrane passes run 146–166 (VTATLAGAIGMISNLAIFFGG) and 174–194 (PFAGIAGLLLLLLAPLTATLV). E203 is a binding site for Zn(2+).

This sequence belongs to the peptidase M48B family. Zn(2+) serves as cofactor.

Its subcellular location is the cell inner membrane. The protein is Protease HtpX homolog of Acidiphilium cryptum (strain JF-5).